Consider the following 369-residue polypeptide: Homoserine O-succinyltransferase (369 aa).

The interval 90–93 (GISA) is important for substrate specificity. One can recognise an AB hydrolase-1 domain in the interval 107 to 353 (WWSGAVGVRA…YGHDAFLKED (247 aa)). The Nucleophile role is filled by Ser-175. Arg-236 is a substrate binding site. Active-site residues include Asp-316 and His-346. Asp-347 lines the substrate pocket.

It belongs to the AB hydrolase superfamily. MetX family. Homodimer.

It localises to the cytoplasm. It carries out the reaction L-homoserine + succinyl-CoA = O-succinyl-L-homoserine + CoA. Its pathway is amino-acid biosynthesis; L-methionine biosynthesis via de novo pathway; O-succinyl-L-homoserine from L-homoserine: step 1/1. Functionally, transfers a succinyl group from succinyl-CoA to L-homoserine, forming succinyl-L-homoserine. In Brevundimonas diminuta (strain ATCC 11568 / DSM 7234 / NBRC 12697 / NCIMB 9393 / NCTC 8545), this protein is Homoserine O-succinyltransferase.